The chain runs to 284 residues: Tropomyosin alpha-3 chain (284 aa).

The residue at position 1 (methionine 1) is an N-acetylmethionine. The disordered stretch occupies residues 1 to 43 (MEAIKKKMQMLKLDKENALDRAEQAEAEQKQAEERSKQLEDEL). Positions 1 to 284 (MEAIKKKMQM…DHALNDMTSI (284 aa)) form a coiled coil. Glutamate 2 carries the N-acetylalanine modification. Residues 12–40 (KLDKENALDRAEQAEAEQKQAEERSKQLE) show a composition bias toward basic and acidic residues. Position 53 is a phosphothreonine (threonine 53). Phosphoserine is present on residues serine 61 and serine 87. Threonine 108 is modified (phosphothreonine). 2 positions are modified to phosphoserine: serine 206 and serine 215. Leucine 228 carries the N6-acetyllysine modification. Position 252 is a phosphothreonine (threonine 252). Tyrosine 261 is modified (phosphotyrosine). Serine 271 carries the post-translational modification Phosphoserine. Threonine 282 carries the phosphothreonine modification. Phosphoserine is present on serine 283.

It belongs to the tropomyosin family. As to quaternary structure, homodimer. Heterodimer of an alpha (TPM1, TPM3 or TPM4) and a beta (TPM2) chain. Interacts with TMOD1. Interacts with TNNT1.

It is found in the cytoplasm. The protein localises to the cytoskeleton. Functionally, binds to actin filaments in muscle and non-muscle cells. Plays a central role, in association with the troponin complex, in the calcium dependent regulation of vertebrate striated muscle contraction. Smooth muscle contraction is regulated by interaction with caldesmon. In non-muscle cells is implicated in stabilizing cytoskeleton actin filaments. The protein is Tropomyosin alpha-3 chain (TPM3) of Bos taurus (Bovine).